Here is a 204-residue protein sequence, read N- to C-terminus: DNA-binding transcriptional activator EvgA (204 aa).

A Response regulatory domain is found at 2 to 117 (NAIIIDDHPL…NIIAAIEAAK (116 aa)). D52 bears the 4-aspartylphosphate mark. The HTH luxR-type domain occupies 137–202 (DQQKLDSLSK…DLYTFAQRNK (66 aa)). A DNA-binding region (H-T-H motif) is located at residues 161 to 180 (NNDIAEKMFISNKTVSTYKS).

As to quaternary structure, homodimer. Phosphorylated by EvgS.

It is found in the cytoplasm. In terms of biological role, member of the two-component regulatory system EvgS/EvgA. Regulates the expression of emrKY operon and yfdX. Also seems to control expression of at least one other multidrug efflux operon. The chain is DNA-binding transcriptional activator EvgA (evgA) from Escherichia coli O157:H7.